Consider the following 525-residue polypeptide: Penton protein (525 aa).

The disordered stretch occupies residues 1-47; sequence MWGLQPPTSIPPPPPPTELTPSTYPAMVNGYPPPAASAQSCSSSGGQ. Positions 8–18 are enriched in pro residues; the sequence is TSIPPPPPPTE. Positions 36–47 are enriched in low complexity; sequence ASAQSCSSSGGQ.

It belongs to the adenoviridae penton family. In terms of assembly, interacts with the fiber protein (via N-terminal tail region). Interacts with the capsid vertex protein; this interaction binds the penton base to neighboring peripentonal hexons.

It is found in the virion. Its subcellular location is the host nucleus. Major capsid protein that self-associates to form penton base pentamers, each in the shape of a pentagon, situated at the 12 vertices of the pseudo T=25 capsid. Involved in virus secondary attachment to host cell after initial attachment by the fiber protein, and in endocytosis of virions. As the virus enters the host cell, penton proteins are shed concomitant with virion acidification in the endosome. The chain is Penton protein from Galliformes (FAdV-10).